We begin with the raw amino-acid sequence, 44 residues long: Thymosin beta-4 (44 aa).

The segment covering 1–25 (MADKPDMAEIEKFDKSKLKKTETQE) has biased composition (basic and acidic residues). A disordered region spans residues 1–44 (MADKPDMAEIEKFDKSKLKKTETQEKNPLPSKETIEQEKQAGES). The residue at position 2 (alanine 2) is an N-acetylalanine. At lysine 4 the chain carries N6-acetyllysine. Lysine 12 is modified (N6-acetyllysine; alternate). A Glycyl lysine isopeptide (Lys-Gly) (interchain with G-Cter in SUMO2); alternate cross-link involves residue lysine 12. Position 23 is a phosphothreonine (threonine 23). N6-acetyllysine is present on lysine 26. A Phosphoserine modification is found at serine 31. Residue lysine 32 is modified to N6-acetyllysine. The segment covering 33 to 44 (ETIEQEKQAGES) has biased composition (basic and acidic residues). Threonine 34 bears the Phosphothreonine mark. Position 39 is an N6-acetyllysine (lysine 39).

This sequence belongs to the thymosin beta family. Originally found in thymus but it is widely distributed in many tissues.

The protein localises to the cytoplasm. It is found in the cytoskeleton. Functionally, plays an important role in the organization of the cytoskeleton. Binds to and sequesters actin monomers (G actin) and therefore inhibits actin polymerization. Its function is as follows. Seraspenide inhibits the entry of hematopoietic pluripotent stem cells into the S-phase. In Oryctolagus cuniculus (Rabbit), this protein is Thymosin beta-4 (TMSB4).